A 108-amino-acid polypeptide reads, in one-letter code: MDLFECINVADAHQKLQEKEAVLVDIRDPQSFAMGHAVQAFHLTNDTLGAFMRDNDFDTPVMVMCYHGNSSKGAAQYLLQQGYDVVYSIDGGFEAWQRQFPAEVAYGA.

Positions 17-105 (QEKEAVLVDI…WQRQFPAEVA (89 aa)) constitute a Rhodanese domain. Residue Cys65 is the Cysteine persulfide intermediate of the active site.

It belongs to the GlpE family.

Its subcellular location is the cytoplasm. It carries out the reaction thiosulfate + hydrogen cyanide = thiocyanate + sulfite + 2 H(+). The catalysed reaction is thiosulfate + [thioredoxin]-dithiol = [thioredoxin]-disulfide + hydrogen sulfide + sulfite + 2 H(+). Functionally, transferase that catalyzes the transfer of sulfur from thiosulfate to thiophilic acceptors such as cyanide or dithiols. May function in a CysM-independent thiosulfate assimilation pathway by catalyzing the conversion of thiosulfate to sulfite, which can then be used for L-cysteine biosynthesis. The polypeptide is Thiosulfate sulfurtransferase GlpE (Escherichia coli O8 (strain IAI1)).